The chain runs to 61 residues: Small ribosomal subunit protein uS14 (61 aa).

The Zn(2+) site is built by C24, C27, C40, and C43.

Belongs to the universal ribosomal protein uS14 family. Zinc-binding uS14 subfamily. Part of the 30S ribosomal subunit. Contacts proteins S3 and S10. Zn(2+) serves as cofactor.

Functionally, binds 16S rRNA, required for the assembly of 30S particles and may also be responsible for determining the conformation of the 16S rRNA at the A site. The protein is Small ribosomal subunit protein uS14 of Borrelia garinii subsp. bavariensis (strain ATCC BAA-2496 / DSM 23469 / PBi) (Borreliella bavariensis).